We begin with the raw amino-acid sequence, 428 residues long: GTPase Obg (428 aa).

The Obg domain occupies 1 to 158 (MFVDQVKIYV…RDVILELKVL (158 aa)). Residues 159–329 (ADVGLVGFPS…LLFEVANLIE (171 aa)) enclose the OBG-type G domain. Residues 165 to 172 (GFPSVGKS), 190 to 194 (FTTIV), 212 to 215 (DLPG), 282 to 285 (NKMD), and 310 to 312 (SAV) contribute to the GTP site. Mg(2+) contacts are provided by Ser172 and Thr192. Positions 350–428 (KFETEGVKFD…ILEYEFEFID (79 aa)) constitute an OCT domain.

The protein belongs to the TRAFAC class OBG-HflX-like GTPase superfamily. OBG GTPase family. As to quaternary structure, monomer. Mg(2+) is required as a cofactor.

It is found in the cytoplasm. In terms of biological role, an essential GTPase which binds GTP, GDP and possibly (p)ppGpp with moderate affinity, with high nucleotide exchange rates and a fairly low GTP hydrolysis rate. Plays a role in control of the cell cycle, stress response, ribosome biogenesis and in those bacteria that undergo differentiation, in morphogenesis control. This is GTPase Obg from Bacillus thuringiensis (strain Al Hakam).